Here is an 868-residue protein sequence, read N- to C-terminus: Leucine-rich repeat receptor-like serine/threonine-protein kinase At2g14510 (868 aa).

A signal peptide spans 1–23; the sequence is METRNKFMLLACATFSIMSLVKS. At 24-510 the chain is on the extracellular side; it reads QNQQGFISLD…KHQPKSWLVA (487 aa). N48, N68, N231, N235, N258, N291, N433, and N446 each carry an N-linked (GlcNAc...) asparagine glycan. LRR repeat units follow at residues 412 to 435, 436 to 458, and 460 to 482; these read RIISLDLSLSGLTGVISPSIQNLT, MLRELDLSNNNLTGEVPEFLATI, and PLLVIHLRGNNLRGSVPQALQDR. Residue N495 is glycosylated (N-linked (GlcNAc...) asparagine). Residues 511-531 traverse the membrane as a helical segment; sequence IVASISCVAVTIIVLVLIFIF. The Cytoplasmic portion of the chain corresponds to 532 to 868; the sequence is RRRKSSTRKV…TFISDIPSAR (337 aa). The 270-residue stretch at 563-832 folds into the Protein kinase domain; it reads NNFEVVLGKG…NMTRVAHELN (270 aa). ATP-binding positions include 569–577 and K590; that span reads LGKGGFGVV. The residue at position 635 (Y635) is a Phosphotyrosine. The active-site Proton acceptor is D687. Residue S721 is modified to Phosphoserine. Residues T722 and T727 each carry the phosphothreonine modification. Residue Y735 is modified to Phosphotyrosine.

Belongs to the protein kinase superfamily. Ser/Thr protein kinase family.

Its subcellular location is the cell membrane. It carries out the reaction L-seryl-[protein] + ATP = O-phospho-L-seryl-[protein] + ADP + H(+). It catalyses the reaction L-threonyl-[protein] + ATP = O-phospho-L-threonyl-[protein] + ADP + H(+). This is Leucine-rich repeat receptor-like serine/threonine-protein kinase At2g14510 from Arabidopsis thaliana (Mouse-ear cress).